The following is a 394-amino-acid chain: Probable glycosyltransferase FCK3 (394 aa).

Belongs to the afumC glycosyltransferase family.

Its pathway is secondary metabolite biosynthesis. In terms of biological role, probable glycosyl transferase; part of the gene cluster that mediates the biosynthesis of cytokinins such as fusatin, fusatinic acids or 8-oxofusatin, known for their growth promoting and anti-senescence activities toward host plants. FCK1 is a bifunctional enzyme that performs the first steps in the biosynthesis of Fusarium cytokinins. It first condenses adenosine monophosphate (AMP) with dimethylallyl diphosphate (DMAPP) to yield isoprenyl adenosine monophosphate. It then catalyzes the removal of the phosphoribose to produce isopentenylaldehyde. The cytochrome P450 monooxygenase then converts isopentenylaldehyde to trans-zeatin. A condensation step converts trans-zeatin to fusatin which is further modified to produce fusatinic acid. The mechanism for oxidation of fusatin to fusatinic acid remains unknown. 8-oxofusatin could be produced through several pathways, via direct oxygenation of fusatin, or via the 8-oxo-pentenyladenine intermediate which itself must arise from either the prenylation of 8-oxo-AMP by FCK1 and/or oxygenation of isopentenylaldehyde. Both the FCK3 and FCK4 enzymes act downstream of the identified cytokinins to produce yet unidentified compounds. The chain is Probable glycosyltransferase FCK3 from Fusarium pseudograminearum (strain CS3096) (Wheat and barley crown-rot fungus).